We begin with the raw amino-acid sequence, 356 residues long: tRNA N6-adenosine threonylcarbamoyltransferase (356 aa).

H110 and H114 together coordinate Fe cation. Substrate contacts are provided by residues 133 to 137 (LVSGG), D166, G179, and N276. Position 304 (D304) interacts with Fe cation.

The protein belongs to the KAE1 / TsaD family. Requires Fe(2+) as cofactor.

It localises to the cytoplasm. The enzyme catalyses L-threonylcarbamoyladenylate + adenosine(37) in tRNA = N(6)-L-threonylcarbamoyladenosine(37) in tRNA + AMP + H(+). Its function is as follows. Required for the formation of a threonylcarbamoyl group on adenosine at position 37 (t(6)A37) in tRNAs that read codons beginning with adenine. Is involved in the transfer of the threonylcarbamoyl moiety of threonylcarbamoyl-AMP (TC-AMP) to the N6 group of A37, together with TsaE and TsaB. TsaD likely plays a direct catalytic role in this reaction. This Teredinibacter turnerae (strain ATCC 39867 / T7901) protein is tRNA N6-adenosine threonylcarbamoyltransferase.